The primary structure comprises 163 residues: Phosphopantetheine adenylyltransferase (163 aa).

S9 contacts substrate. Residues 9–10 (SF) and H17 contribute to the ATP site. Positions 41, 75, and 89 each coordinate substrate. ATP is bound by residues 90 to 92 (GIR), E100, and 125 to 131 (HLYVRSD).

Belongs to the bacterial CoaD family. Homohexamer. Requires Mg(2+) as cofactor.

The protein resides in the cytoplasm. The enzyme catalyses (R)-4'-phosphopantetheine + ATP + H(+) = 3'-dephospho-CoA + diphosphate. It participates in cofactor biosynthesis; coenzyme A biosynthesis; CoA from (R)-pantothenate: step 4/5. Functionally, reversibly transfers an adenylyl group from ATP to 4'-phosphopantetheine, yielding dephospho-CoA (dPCoA) and pyrophosphate. The chain is Phosphopantetheine adenylyltransferase from Borreliella burgdorferi (strain ZS7) (Borrelia burgdorferi).